Consider the following 582-residue polypeptide: MLNDKDLSTWQTFRRLWPMISPFKAGLAVAAIALIINAAGDTLMLSLLKPLLDEGFGKADRSVLLWMPLVVIGLMLVRGASGFVSSYCVSWVSGKVVMNMRRRLFSHIMGMPVAFFDQQSTGTLLSRITYDSEQVAASSSGALITVVREGASIIGLFILMFYYSWQLSIILIVIAPIVSIAMRMVSKRFRSISKNMQDTMGHVTTSTEQMLKGHKEVLMFGGQDVETKRFEQVSNRMRQQGMKMVSASSISDPIIQLIASLALAFVLYAASFPSVMETLTAGTITVVFSSMIALMRPLKSLTNVNAQFQRGMAACQTLFAILDMEQERDTGKREIERAKGELEFRQVNFAYPARENLALKNINLHIPVGKTVALVGRSGSGKSTIASLITRFYDIQSGEILLDGHDLREYRLSSLRNQVALVSQNVHLFNDTIANNIAYARNENYSREEIERAAKMAYAMDFINKMEHGLDTVIGENGVMLSGGQRQRIAIARALLRDSPILILDEATSALDTESERAIQAALDELQKDRTALVIAHRLSTIEKADEILVVEDGRIIERGNHTALLATNGAYAQLHRMQFGE.

Helical transmembrane passes span 16–36 (LWPM…ALII), 63–83 (VLLW…ASGF), 153–173 (IIGL…ILIV), 253–273 (PIIQ…ASFP), and 275–295 (VMET…IALM). The ABC transmembrane type-1 domain maps to 28–310 (AVAAIALIIN…LTNVNAQFQR (283 aa)). The region spanning 342 to 578 (LEFRQVNFAY…NGAYAQLHRM (237 aa)) is the ABC transporter domain. An ATP-binding site is contributed by 376–383 (GRSGSGKS).

The protein belongs to the ABC transporter superfamily. Lipid exporter (TC 3.A.1.106) family. Homodimer.

The protein localises to the cell inner membrane. It catalyses the reaction ATP + H2O + lipid A-core oligosaccharideSide 1 = ADP + phosphate + lipid A-core oligosaccharideSide 2.. In terms of biological role, involved in lipopolysaccharide (LPS) biosynthesis. Translocates lipid A-core from the inner to the outer leaflet of the inner membrane. Transmembrane domains (TMD) form a pore in the inner membrane and the ATP-binding domain (NBD) is responsible for energy generation. This chain is ATP-dependent lipid A-core flippase, found in Pectobacterium atrosepticum (strain SCRI 1043 / ATCC BAA-672) (Erwinia carotovora subsp. atroseptica).